Consider the following 180-residue polypeptide: Large ribosomal subunit protein uL16 (180 aa).

This sequence belongs to the universal ribosomal protein uL16 family.

The chain is Large ribosomal subunit protein uL16 from Hyperthermus butylicus (strain DSM 5456 / JCM 9403 / PLM1-5).